The sequence spans 907 residues: Leucine-rich repeat-containing G-protein coupled receptor 5 (907 aa).

Positions 1–21 are cleaved as a signal peptide; sequence MDTSSVGVLLSLPVLLQLAAG. Residues 22–553 lie on the Extracellular side of the membrane; sequence GGSPRPGTLL…SPGPFKLCEY (532 aa). The 32-residue stretch at 33–64 folds into the LRRNT domain; that stretch reads GCPAHCQCEPDGRMLLRVDCSDLGLSELPSNL. Disulfide bonds link C34–C40 and C38–C52. 17 LRR repeats span residues 44–64, 65–88, 89–112, 114–136, 137–160, 162–184, 185–208, 209–232, 233–256, 257–279, 281–303, 304–327, 328–350, 351–375, 377–396, 397–420, and 421–444; these read GRMLLRVDCSDLGLSELPSNL, SVFTSYLDLSMNNISQLPPSPLHS, LRFLEELRLAGNALTYIPKGAFAG, YSLKVLMLQNNHLRQVPTEALQN, LRSLQSLRLDANRISSVPPSCFSG, HSLRHLWLDDNALTEIPVQAFRS, LSALQAMTLALNKIHHIPDYAFGN, LSSLVVLHLHNNRIHSLGKKCFDG, LHSLETLDLNYNNLDEFPTAVRTL, SNLKELGFHSNNIKSIPEKAFVG, PSLITIHFYDNPIQLVGRSAFQH, LPELRTLTLNGASQITEFPDLTGT, ASLESLTLTGAQISSLPQTVCDQ, LPNLQVLDLSYNLLEDLPSFSVCQK, QKIDLRHNEIYEIQADTFQQ, LFSLRSLNLAWNKIAIIDPNAFST, and LPSLRKLDLSSNRLSSIPVTGLHG. N-linked (GlcNAc...) asparagine glycans are attached at residues N63 and N77. N-linked (GlcNAc...) asparagine glycosylation occurs at N208. C348 and C373 form a disulfide bridge. Cysteines 479 and 541 form a disulfide. The N-linked (GlcNAc...) asparagine glycan is linked to N500. The helical transmembrane segment at 554 to 574 threads the bilayer; sequence LFGSWLIRIGVWTIAVLALTC. The stretch at 564–585 is one LRR 18 repeat; that stretch reads VWTIAVLALTCNALVTSTVFRA. Residues 575–593 are Cytoplasmic-facing; it reads NALVTSTVFRAAVYISSIK. The helical transmembrane segment at 594-614 threads the bilayer; the sequence is LLIGLIAAVNMLMGVSSAVLA. Residues 615 to 638 are Extracellular-facing; the sequence is GVDAFTFGSFAQHGAWWEQAVGCQ. C637 and C712 are joined by a disulfide. Residues 639 to 659 traverse the membrane as a helical segment; sequence VVGFLSIFASESSVFLLTLAA. The Cytoplasmic segment spans residues 660–682; that stretch reads LERGWSVKCSAKFETQTPFPSLR. A helical transmembrane segment spans residues 683–703; the sequence is ATLALCALLAGTVAAVPLLGG. Residues 704–723 lie on the Extracellular side of the membrane; the sequence is SEYSASPLCLPLPFGEPRAT. Residues 724-744 traverse the membrane as a helical segment; the sequence is GYMVALVLLNSLCFLVMTVAY. The Cytoplasmic portion of the chain corresponds to 745-767; sequence TRLYCHLEKGDLESMWDCSMVKH. The chain crosses the membrane as a helical span at residues 768–788; that stretch reads VALLLFTNCILHCPVAFLSFS. Over 789–802 the chain is Extracellular; sequence SLLNLTFISPEVIK. Residue N792 is glycosylated (N-linked (GlcNAc...) asparagine). A helical transmembrane segment spans residues 803–823; that stretch reads FILLVIVPLPACLNPLLYILF. At 824 to 907 the chain is on the cytoplasmic side; sequence NPHFKEDLGS…LSSVAFVPCL (84 aa).

This sequence belongs to the G-protein coupled receptor 1 family. As to quaternary structure, identified in a complex composed of RNF43, LGR5 and RSPO1. Also interacts with other R-spondin ligands, including RSPO2, RSPO3 and RSPO4.

It is found in the cell membrane. The protein localises to the golgi apparatus. Its subcellular location is the trans-Golgi network membrane. Its function is as follows. Receptor for R-spondins that potentiates the canonical Wnt signaling pathway and acts as a stem cell marker of the intestinal epithelium and the hair follicle. Upon binding to R-spondins (RSPO1, RSPO2, RSPO3 or RSPO4), associates with phosphorylated LRP6 and frizzled receptors that are activated by extracellular Wnt receptors, triggering the canonical Wnt signaling pathway to increase expression of target genes. In contrast to classical G-protein coupled receptors, does not activate heterotrimeric G-proteins to transduce the signal. Involved in the development and/or maintenance of the adult intestinal stem cells during postembryonic development. The protein is Leucine-rich repeat-containing G-protein coupled receptor 5 (LGR5) of Bos taurus (Bovine).